Reading from the N-terminus, the 217-residue chain is MATLTPRQQQIFDLIRNTIRRTGFPPTRAEIAAEFGFSSPNAAEEHLRALARKGVIELTPGASRGIRLKVSRSDSELPDQFSLPMAGVLQLTLPLVGRVAAGSPILAAEHIDRQYQVDASVFDERPDYLLRVRGLSMRDAGILDGDLLAVRRASEAANGKIVVARLGDDVTVKRLQRRGGHIELIAENPDFTNIIVEPGEEFSLEGIAVGLIRSSGF.

Residues 28 to 48 (RAEIAAEFGFSSPNAAEEHLR) constitute a DNA-binding region (H-T-H motif). Residues S136 and K173 each act as for autocatalytic cleavage activity in the active site.

It belongs to the peptidase S24 family. Homodimer.

The enzyme catalyses Hydrolysis of Ala-|-Gly bond in repressor LexA.. In terms of biological role, represses a number of genes involved in the response to DNA damage (SOS response), including recA and lexA. In the presence of single-stranded DNA, RecA interacts with LexA causing an autocatalytic cleavage which disrupts the DNA-binding part of LexA, leading to derepression of the SOS regulon and eventually DNA repair. This Cupriavidus taiwanensis (strain DSM 17343 / BCRC 17206 / CCUG 44338 / CIP 107171 / LMG 19424 / R1) (Ralstonia taiwanensis (strain LMG 19424)) protein is LexA repressor.